The sequence spans 435 residues: 5-hydroxybenzimidazole synthase (435 aa).

Substrate contacts are provided by residues M95, Y124, H163, 186-188, 227-230, and E266; these read SKG and NGLR. H270 is a binding site for Zn(2+). Residue Y293 participates in substrate binding. H334 contributes to the Zn(2+) binding site. 3 residues coordinate [4Fe-4S] cluster: C410, C413, and C417.

The protein belongs to the ThiC family. 5-hydroxybenzimidazole synthase subfamily. As to quaternary structure, homodimer. [4Fe-4S] cluster is required as a cofactor.

It carries out the reaction 5-amino-1-(5-phospho-beta-D-ribosyl)imidazole + AH2 + S-adenosyl-L-methionine = 5-hydroxybenzimidazole + 5'-deoxyadenosine + formate + L-methionine + A + NH4(+) + phosphate + 2 H(+). Functionally, catalyzes the conversion of aminoimidazole ribotide (AIR) to 5-hydroxybenzimidazole (5-HBI) in a radical S-adenosyl-L-methionine (SAM)-dependent reaction. Is thus involved in the anaerobic biosynthesis of the benzimidazole lower axial ligand of the cobamide produced by G.metallireducens. The protein is 5-hydroxybenzimidazole synthase of Geobacter metallireducens (strain ATCC 53774 / DSM 7210 / GS-15).